A 167-amino-acid chain; its full sequence is uncharacterized protein (167 aa).

The protein localises to the mitochondrion. This is an uncharacterized protein from Ascobolus immersus.